Here is a 567-residue protein sequence, read N- to C-terminus: 2-succinyl-5-enolpyruvyl-6-hydroxy-3-cyclohexene-1-carboxylate synthase (567 aa).

This sequence belongs to the TPP enzyme family. MenD subfamily. Homodimer. The cofactor is Mg(2+). Requires Mn(2+) as cofactor. It depends on thiamine diphosphate as a cofactor.

It carries out the reaction isochorismate + 2-oxoglutarate + H(+) = 5-enolpyruvoyl-6-hydroxy-2-succinyl-cyclohex-3-ene-1-carboxylate + CO2. Its pathway is quinol/quinone metabolism; 1,4-dihydroxy-2-naphthoate biosynthesis; 1,4-dihydroxy-2-naphthoate from chorismate: step 2/7. It participates in quinol/quinone metabolism; menaquinone biosynthesis. Functionally, catalyzes the thiamine diphosphate-dependent decarboxylation of 2-oxoglutarate and the subsequent addition of the resulting succinic semialdehyde-thiamine pyrophosphate anion to isochorismate to yield 2-succinyl-5-enolpyruvyl-6-hydroxy-3-cyclohexene-1-carboxylate (SEPHCHC). In Yersinia pestis bv. Antiqua (strain Antiqua), this protein is 2-succinyl-5-enolpyruvyl-6-hydroxy-3-cyclohexene-1-carboxylate synthase.